The following is a 433-amino-acid chain: Homogentisate 1,2-dioxygenase (433 aa).

The Proton acceptor role is filled by His-288. Positions 331 and 337 each coordinate Fe cation. Residues Tyr-346 and His-367 each coordinate homogentisate. Residue His-367 participates in Fe cation binding.

It belongs to the homogentisate dioxygenase family. In terms of assembly, hexamer; dimer of trimers. Requires Fe cation as cofactor.

The enzyme catalyses homogentisate + O2 = 4-maleylacetoacetate + H(+). Its pathway is amino-acid degradation; L-phenylalanine degradation; acetoacetate and fumarate from L-phenylalanine: step 4/6. In terms of biological role, involved in the catabolism of homogentisate (2,5-dihydroxyphenylacetate or 2,5-OH-PhAc), a central intermediate in the degradation of phenylalanine and tyrosine. Catalyzes the oxidative ring cleavage of the aromatic ring of homogentisate to yield maleylacetoacetate. In Pseudomonas entomophila (strain L48), this protein is Homogentisate 1,2-dioxygenase.